A 480-amino-acid polypeptide reads, in one-letter code: MPKEGITPRAQDYSQWYLDIVQQADLADYAEVVKGCIVFKPTGYAIWEAIQRGLDDRIKATGHVNAYFPLLIPKSFLMKEAEHVEGFAPEVAEVTRAGGEDLAEPYVIRPTSETIIGYFYSKWVRSYRDLPLLINQWANVMRWEMRTRPFLRTTEFLWQEGHTVHATEEDAERETLLILHEVYADFVEKEMAIPVIKGLKSEKEKFPGALRSYCIEAMMQDGRALQAGTSHNLGQNFARAFDITYTDQQNTIQYAWTTSWGVSTRLIGALIMTHSDDEGLVIPPRLAPTQVVVVPIYRNDAERSVVMEAVQRMTAEWKGRLRFKIDDRDNLTPGFKFNEWELKGVPIRVEIGPKDIEKGSVAIARRDQPGREGKSFVPQDGLTDRLTALLEEIQQALYRRALTFREDHTADVATYDELKQQVERGFARCYWAGTTEDEKRIQEETRATIRCIPLDQPQQAGRCVYTGKETTQQVIFARAY.

It belongs to the class-II aminoacyl-tRNA synthetase family. ProS type 3 subfamily. Homodimer.

It is found in the cytoplasm. The catalysed reaction is tRNA(Pro) + L-proline + ATP = L-prolyl-tRNA(Pro) + AMP + diphosphate. In terms of biological role, catalyzes the attachment of proline to tRNA(Pro) in a two-step reaction: proline is first activated by ATP to form Pro-AMP and then transferred to the acceptor end of tRNA(Pro). The protein is Proline--tRNA ligase of Roseiflexus sp. (strain RS-1).